We begin with the raw amino-acid sequence, 89 residues long: Small ribosomal subunit protein uS15 (89 aa).

This sequence belongs to the universal ribosomal protein uS15 family. As to quaternary structure, part of the 30S ribosomal subunit. Forms a bridge to the 50S subunit in the 70S ribosome, contacting the 23S rRNA.

Its function is as follows. One of the primary rRNA binding proteins, it binds directly to 16S rRNA where it helps nucleate assembly of the platform of the 30S subunit by binding and bridging several RNA helices of the 16S rRNA. In terms of biological role, forms an intersubunit bridge (bridge B4) with the 23S rRNA of the 50S subunit in the ribosome. The polypeptide is Small ribosomal subunit protein uS15 (Sinorhizobium medicae (strain WSM419) (Ensifer medicae)).